We begin with the raw amino-acid sequence, 332 residues long: MAVFTAVSDSDLAQWMRHYELGDVLAFRGIPSGIENSNFFLTTTRGEYVLTIFEKLTAQQLPFYLDLMRHLAAHGVPVPDPIPRDDGALFGELHGKPAAIVTKLDGAAELAPGVEHCIEVGQMLARLHLAGRDYPRNQPNLRSLPWWQENVPAIVPFITDAQRALLEGELAHQAGFFASDDYAALPAGPCHCDLFRDNVLFAHAAPGTGHDVRLGGFFDFYFAGCDKWLFDVAVTVNDWCVDLATGVLDVARADALLRAYQTVRPFTAEERRHWSDMLRAGAYRFWVSRLYDFYLPRAAEMLKPHDPGHFERILRERIAHTPALPEIQTACN.

This sequence belongs to the pseudomonas-type ThrB family.

The catalysed reaction is L-homoserine + ATP = O-phospho-L-homoserine + ADP + H(+). The protein operates within amino-acid biosynthesis; L-threonine biosynthesis; L-threonine from L-aspartate: step 4/5. This chain is Homoserine kinase, found in Burkholderia cenocepacia (strain HI2424).